Consider the following 256-residue polypeptide: Pimeloyl-[acyl-carrier protein] methyl ester esterase (256 aa).

An AB hydrolase-1 domain is found at 15 to 242 (HLVLLHGWGL…AAHAPFISHP (228 aa)). Substrate contacts are provided by residues Trp22, 82 to 83 (SL), and 143 to 147 (FLALQ). Catalysis depends on Ser82, which acts as the Nucleophile. Catalysis depends on residues Asp207 and His235. Residue His235 coordinates substrate.

The protein belongs to the AB hydrolase superfamily. Carboxylesterase BioH family. In terms of assembly, monomer.

Its subcellular location is the cytoplasm. It carries out the reaction 6-carboxyhexanoyl-[ACP] methyl ester + H2O = 6-carboxyhexanoyl-[ACP] + methanol + H(+). Its pathway is cofactor biosynthesis; biotin biosynthesis. The physiological role of BioH is to remove the methyl group introduced by BioC when the pimeloyl moiety is complete. It allows to synthesize pimeloyl-ACP via the fatty acid synthetic pathway through the hydrolysis of the ester bonds of pimeloyl-ACP esters. The protein is Pimeloyl-[acyl-carrier protein] methyl ester esterase of Escherichia coli (strain K12 / MC4100 / BW2952).